The following is a 281-amino-acid chain: Diaminopimelate epimerase (281 aa).

The substrate site is built by Asn-13, Gln-46, and Asn-66. Cys-75 acts as the Proton donor in catalysis. Substrate-binding positions include Gly-76–Asn-77, Asn-160, Asn-193, and Glu-211–Arg-212. The active-site Proton acceptor is the Cys-220. Residue Gly-221 to Thr-222 coordinates substrate.

The protein belongs to the diaminopimelate epimerase family. As to quaternary structure, homodimer.

Its subcellular location is the cytoplasm. It catalyses the reaction (2S,6S)-2,6-diaminopimelate = meso-2,6-diaminopimelate. It functions in the pathway amino-acid biosynthesis; L-lysine biosynthesis via DAP pathway; DL-2,6-diaminopimelate from LL-2,6-diaminopimelate: step 1/1. In terms of biological role, catalyzes the stereoinversion of LL-2,6-diaminopimelate (L,L-DAP) to meso-diaminopimelate (meso-DAP), a precursor of L-lysine and an essential component of the bacterial peptidoglycan. The chain is Diaminopimelate epimerase from Acinetobacter baumannii (strain ATCC 17978 / DSM 105126 / CIP 53.77 / LMG 1025 / NCDC KC755 / 5377).